The chain runs to 118 residues: Large ribosomal subunit protein uL22 (118 aa).

This sequence belongs to the universal ribosomal protein uL22 family. Part of the 50S ribosomal subunit.

Its function is as follows. This protein binds specifically to 23S rRNA; its binding is stimulated by other ribosomal proteins, e.g. L4, L17, and L20. It is important during the early stages of 50S assembly. It makes multiple contacts with different domains of the 23S rRNA in the assembled 50S subunit and ribosome. The globular domain of the protein is located near the polypeptide exit tunnel on the outside of the subunit, while an extended beta-hairpin is found that lines the wall of the exit tunnel in the center of the 70S ribosome. This Treponema denticola (strain ATCC 35405 / DSM 14222 / CIP 103919 / JCM 8153 / KCTC 15104) protein is Large ribosomal subunit protein uL22.